A 242-amino-acid chain; its full sequence is Tryptophan synthase alpha chain (242 aa).

Active-site proton acceptor residues include Glu31 and Asp42.

Belongs to the TrpA family. In terms of assembly, tetramer of two alpha and two beta chains.

It catalyses the reaction (1S,2R)-1-C-(indol-3-yl)glycerol 3-phosphate + L-serine = D-glyceraldehyde 3-phosphate + L-tryptophan + H2O. Its pathway is amino-acid biosynthesis; L-tryptophan biosynthesis; L-tryptophan from chorismate: step 5/5. The alpha subunit is responsible for the aldol cleavage of indoleglycerol phosphate to indole and glyceraldehyde 3-phosphate. In Staphylococcus aureus (strain bovine RF122 / ET3-1), this protein is Tryptophan synthase alpha chain.